We begin with the raw amino-acid sequence, 274 residues long: tRNA-cytidine(32) 2-sulfurtransferase (274 aa).

The PP-loop motif signature appears at 40–45 (SGGKDS). Residues cysteine 115, cysteine 118, and cysteine 206 each contribute to the [4Fe-4S] cluster site.

Belongs to the TtcA family. In terms of assembly, homodimer. The cofactor is Mg(2+). [4Fe-4S] cluster is required as a cofactor.

It localises to the cytoplasm. It catalyses the reaction cytidine(32) in tRNA + S-sulfanyl-L-cysteinyl-[cysteine desulfurase] + AH2 + ATP = 2-thiocytidine(32) in tRNA + L-cysteinyl-[cysteine desulfurase] + A + AMP + diphosphate + H(+). It functions in the pathway tRNA modification. In terms of biological role, catalyzes the ATP-dependent 2-thiolation of cytidine in position 32 of tRNA, to form 2-thiocytidine (s(2)C32). The sulfur atoms are provided by the cysteine/cysteine desulfurase (IscS) system. This chain is tRNA-cytidine(32) 2-sulfurtransferase, found in Pseudomonas syringae pv. tomato (strain ATCC BAA-871 / DC3000).